The sequence spans 280 residues: Dermonecrotic toxin LsSicTox-alphaIA1 (280 aa).

H12 is an active-site residue. Positions 32 and 34 each coordinate Mg(2+). H48 serves as the catalytic Nucleophile. Intrachain disulfides connect C52/C58 and C54/C197. D92 is a binding site for Mg(2+).

This sequence belongs to the arthropod phospholipase D family. Class II subfamily. The cofactor is Mg(2+). In terms of tissue distribution, expressed by the venom gland.

The protein resides in the secreted. The catalysed reaction is an N-(acyl)-sphingosylphosphocholine = an N-(acyl)-sphingosyl-1,3-cyclic phosphate + choline. It carries out the reaction an N-(acyl)-sphingosylphosphoethanolamine = an N-(acyl)-sphingosyl-1,3-cyclic phosphate + ethanolamine. The enzyme catalyses a 1-acyl-sn-glycero-3-phosphocholine = a 1-acyl-sn-glycero-2,3-cyclic phosphate + choline. It catalyses the reaction a 1-acyl-sn-glycero-3-phosphoethanolamine = a 1-acyl-sn-glycero-2,3-cyclic phosphate + ethanolamine. Functionally, dermonecrotic toxins cleave the phosphodiester linkage between the phosphate and headgroup of certain phospholipids (sphingolipid and lysolipid substrates), forming an alcohol (often choline) and a cyclic phosphate. This toxin acts on sphingomyelin (SM). It may also act on ceramide phosphoethanolamine (CPE), lysophosphatidylcholine (LPC) and lysophosphatidylethanolamine (LPE), but not on lysophosphatidylserine (LPS), and lysophosphatidylglycerol (LPG). It acts by transphosphatidylation, releasing exclusively cyclic phosphate products as second products. Induces dermonecrosis, hemolysis, increased vascular permeability, edema, inflammatory response, and platelet aggregation. The polypeptide is Dermonecrotic toxin LsSicTox-alphaIA1 (Loxosceles similis (Brazilian brown spider)).